Reading from the N-terminus, the 170-residue chain is Adenine phosphoribosyltransferase (170 aa).

This sequence belongs to the purine/pyrimidine phosphoribosyltransferase family. As to quaternary structure, homodimer.

It is found in the cytoplasm. The catalysed reaction is AMP + diphosphate = 5-phospho-alpha-D-ribose 1-diphosphate + adenine. It participates in purine metabolism; AMP biosynthesis via salvage pathway; AMP from adenine: step 1/1. Catalyzes a salvage reaction resulting in the formation of AMP, that is energically less costly than de novo synthesis. The protein is Adenine phosphoribosyltransferase of Lactococcus lactis subsp. cremoris (strain MG1363).